Reading from the N-terminus, the 299-residue chain is ATP synthase gamma chain (299 aa).

This sequence belongs to the ATPase gamma chain family. In terms of assembly, F-type ATPases have 2 components, CF(1) - the catalytic core - and CF(0) - the membrane proton channel. CF(1) has five subunits: alpha(3), beta(3), gamma(1), delta(1), epsilon(1). CF(0) has three main subunits: a, b and c.

It is found in the cell membrane. Its function is as follows. Produces ATP from ADP in the presence of a proton gradient across the membrane. The gamma chain is believed to be important in regulating ATPase activity and the flow of protons through the CF(0) complex. In Levilactobacillus brevis (strain ATCC 367 / BCRC 12310 / CIP 105137 / JCM 1170 / LMG 11437 / NCIMB 947 / NCTC 947) (Lactobacillus brevis), this protein is ATP synthase gamma chain.